A 177-amino-acid polypeptide reads, in one-letter code: Large ribosomal subunit protein uL6 (177 aa).

The protein belongs to the universal ribosomal protein uL6 family. In terms of assembly, part of the 50S ribosomal subunit.

Its function is as follows. This protein binds to the 23S rRNA, and is important in its secondary structure. It is located near the subunit interface in the base of the L7/L12 stalk, and near the tRNA binding site of the peptidyltransferase center. The chain is Large ribosomal subunit protein uL6 from Shewanella amazonensis (strain ATCC BAA-1098 / SB2B).